The sequence spans 287 residues: MKNFEVLQPLQNSLSGLPLWVSERILQQINQLTHYEPVIGIMGKTGAGKSSLCNALFAGEVSPVSDVAACTRDPLRFRLQIGEHFMTIVDLPGVGESGVRDTEYAALYREQLPRLDLILWLIKADDRALATDEHFYRQVIGEAYRHKMLFVISQSDKAEPTSGGNILSTEQKQNISRKICLLHELFQPVHPVCAVSVRLQWGLRVMAERMIKCLPREASSPVVALLQHPFRTTVAREQARDDFGETVGAILDTVSTFPLIPAPVRTIIQAVRSSVVSVARAVWDFFF.

GTP contacts are provided by residues 43-50 (GKTGAGKS), 90-93 (DLPG), and 156-159 (DKAE). The G domain maps to 48 to 140 (GKSSLCNALF…TDEHFYRQVI (93 aa)).

This sequence to E.coli YkfA and YeeP.

This is an uncharacterized protein from Escherichia coli (strain K12).